The sequence spans 79 residues: D-alanyl carrier protein (79 aa).

The Carrier domain occupies 1-76; that stretch reads MKEQIFDIIE…KIAARVQEKK (76 aa). S34 is subject to O-(pantetheine 4'-phosphoryl)serine.

The protein belongs to the DltC family. Post-translationally, 4'-phosphopantetheine is transferred from CoA to a specific serine of apo-DCP.

It is found in the cytoplasm. It participates in cell wall biogenesis; lipoteichoic acid biosynthesis. Its function is as follows. Carrier protein involved in the D-alanylation of lipoteichoic acid (LTA). The loading of thioester-linked D-alanine onto DltC is catalyzed by D-alanine--D-alanyl carrier protein ligase DltA. The DltC-carried D-alanyl group is further transferred to cell membrane phosphatidylglycerol (PG) by forming an ester bond, probably catalyzed by DltD. D-alanylation of LTA plays an important role in modulating the properties of the cell wall in Gram-positive bacteria, influencing the net charge of the cell wall. The sequence is that of D-alanyl carrier protein from Lactococcus lactis subsp. lactis (strain IL1403) (Streptococcus lactis).